We begin with the raw amino-acid sequence, 218 residues long: Transmembrane gamma-carboxyglutamic acid protein 1 (218 aa).

A propeptide spanning residues 1-20 is cleaved from the precursor; that stretch reads MGRVFLTGEKANSILKRYPR. The region spanning 21–66 is the Gla domain; sequence ANGFFEEIRQGNIERECKEEFCTFEEAREAFENNEKTKEFWSTYTK. The Extracellular portion of the chain corresponds to 21-83; that stretch reads ANGFFEEIRQ…RGSDWFQFYL (63 aa). An intrachain disulfide couples Cys37 to Cys42. Residues 84–106 form a helical membrane-spanning segment; that stretch reads TFPLIFGLFIILLVIFLIWRCFL. The Cytoplasmic segment spans residues 107–218; sequence RNKTRRQTVT…PMVPVVTTIK (112 aa). The segment at 161–195 is disordered; it reads TRLSNCDPPPTYEEATGQVNLQRSETEPHLDPPPE.

Gla residues are produced after subsequent post-translational modifications of glutamate by a vitamin K-dependent gamma-carboxylase. Highly expressed in the spinal cord.

It localises to the membrane. The polypeptide is Transmembrane gamma-carboxyglutamic acid protein 1 (PRRG1) (Homo sapiens (Human)).